Reading from the N-terminus, the 122-residue chain is MIQQESRLRVADNTGAKEILTIRVLGGSGRRYAGIGDVIVATVKDAIPGGNVKKGDVVKAVIVRTVKERRRPDGSYIRFDENAAVILKNDGDPRGTRIFGPVGRELREKKFMKIISLAPEVL.

Belongs to the universal ribosomal protein uL14 family. As to quaternary structure, part of the 50S ribosomal subunit. Forms a cluster with proteins L3 and L19. In the 70S ribosome, L14 and L19 interact and together make contacts with the 16S rRNA in bridges B5 and B8.

Binds to 23S rRNA. Forms part of two intersubunit bridges in the 70S ribosome. The chain is Large ribosomal subunit protein uL14 from Streptomyces coelicolor (strain ATCC BAA-471 / A3(2) / M145).